We begin with the raw amino-acid sequence, 279 residues long: 3-methyl-2-oxobutanoate hydroxymethyltransferase (279 aa).

The Mg(2+) site is built by aspartate 43 and aspartate 82. 3-methyl-2-oxobutanoate contacts are provided by residues aspartate 43–serine 44, aspartate 82, and lysine 112. Glutamate 114 contacts Mg(2+). Glutamate 181 (proton acceptor) is an active-site residue.

It belongs to the PanB family. Homodecamer; pentamer of dimers. Mg(2+) is required as a cofactor.

The protein localises to the cytoplasm. The catalysed reaction is 3-methyl-2-oxobutanoate + (6R)-5,10-methylene-5,6,7,8-tetrahydrofolate + H2O = 2-dehydropantoate + (6S)-5,6,7,8-tetrahydrofolate. It participates in cofactor biosynthesis; (R)-pantothenate biosynthesis; (R)-pantoate from 3-methyl-2-oxobutanoate: step 1/2. Functionally, catalyzes the reversible reaction in which hydroxymethyl group from 5,10-methylenetetrahydrofolate is transferred onto alpha-ketoisovalerate to form ketopantoate. The polypeptide is 3-methyl-2-oxobutanoate hydroxymethyltransferase (Bacillus pumilus (strain SAFR-032)).